A 119-amino-acid chain; its full sequence is Large ribosomal subunit protein bL19 (119 aa).

This sequence belongs to the bacterial ribosomal protein bL19 family.

In terms of biological role, this protein is located at the 30S-50S ribosomal subunit interface and may play a role in the structure and function of the aminoacyl-tRNA binding site. The sequence is that of Large ribosomal subunit protein bL19 from Treponema denticola (strain ATCC 35405 / DSM 14222 / CIP 103919 / JCM 8153 / KCTC 15104).